The sequence spans 350 residues: Small-conductance mechanosensitive channel MscMJ (350 aa).

The next 5 helical transmembrane spans lie at 10-30 (ISNI…GKIV), 59-79 (LPII…FLIL), 91-111 (VKVV…DGIF), 130-150 (IIKP…ILTA), and 154-174 (VGYD…ALAL).

Belongs to the MscS (TC 1.A.23) family.

The protein localises to the cell membrane. In terms of biological role, small-conductance mechanosensitive channel that opens in response to stretch forces in the membrane lipid bilayer. Exhibits a sixfold preference for cations over anions. Non-rectifying. In Methanocaldococcus jannaschii (strain ATCC 43067 / DSM 2661 / JAL-1 / JCM 10045 / NBRC 100440) (Methanococcus jannaschii), this protein is Small-conductance mechanosensitive channel MscMJ.